The chain runs to 140 residues: Type II secretion system core protein G (140 aa).

The propeptide at 1-6 (MQRQRG) is leader sequence. Position 7 is an N-methylphenylalanine (phenylalanine 7). A helical transmembrane segment spans residues 7-27 (FTLLEIMVVIVILGVLASLVV). The interval 120–140 (LGPDGVPESNDDIGNWTIGKK) is disordered.

It belongs to the GSP G family. In terms of assembly, type II secretion system is composed of four main components: the outer membrane complex, the inner membrane complex, the cytoplasmic secretion ATPase and the periplasm-spanning pseudopilus. Forms homomultimers. Post-translationally, cleaved by the prepilin peptidase. Methylated by prepilin peptidase at the amino group of the N-terminal phenylalanine once the leader sequence is cleaved.

The protein localises to the cell inner membrane. Its function is as follows. Core component of the type II secretion system required for the energy-dependent secretion of extracellular factors such as proteases and toxins from the periplasm. Pseudopilin (pilin-like) protein that polymerizes to form the pseudopilus. Further polymerization triggers pseudopilus growth. This chain is Type II secretion system core protein G (pulG), found in Klebsiella pneumoniae.